The following is a 559-amino-acid chain: Cytochrome P450 86B1 (559 aa).

The chain crosses the membrane as a helical span at residues 31 to 51 (FLLRDVQILELLIAIFVFVAI). Cysteine 488 provides a ligand contact to heme.

The protein belongs to the cytochrome P450 family. Heme serves as cofactor. In terms of tissue distribution, expressed in roots endodermis, anthers, stigmas, stomata of young pedicels of inflorescences, the placenta region of siliques, at the level of the hilum in matures seeds, at the junction of siliques to pedicels where abscission of floral parts takes place and in nectary glands.

The protein resides in the endoplasmic reticulum membrane. Functionally, involved in very long chain fatty acids (VLCFA) omega-hydroxylation. Required for the synthesis of saturated VLCFA alpha, omega-bifunctional suberin monomers. The sequence is that of Cytochrome P450 86B1 (CYP86B1) from Arabidopsis thaliana (Mouse-ear cress).